Reading from the N-terminus, the 293-residue chain is Putative ribose uptake protein RbsU (293 aa).

A run of 10 helical transmembrane segments spans residues 5–24, 34–51, 58–80, 95–114, 121–138, 153–170, 177–199, 212–234, 241–263, and 273–292; these read AILI…TIAS, IFGA…LALF, GGMA…IITF, TTAF…LGNW, IIGF…RMTV, SAVI…IYSA, IGGF…IYAL, VSWQ…LISA, LATG…IFFL, and MITI…TVFI.

Belongs to the GRP transporter (TC 2.A.7.5) family.

The protein resides in the cell membrane. In terms of biological role, could be involved in the uptake of ribose. This chain is Putative ribose uptake protein RbsU (rbsU), found in Staphylococcus epidermidis (strain ATCC 35984 / DSM 28319 / BCRC 17069 / CCUG 31568 / BM 3577 / RP62A).